An 85-amino-acid polypeptide reads, in one-letter code: Probable weak neurotoxin 3FTx-Lio1 (85 aa).

The N-terminal stretch at 1 to 18 (MKAVILSLVAAFLYSGYT) is a signal peptide. Disulfide bonds link Cys21–Cys42, Cys24–Cys29, Cys35–Cys60, Cys64–Cys75, and Cys76–Cys81.

Belongs to the three-finger toxin family. Ancestral subfamily. In terms of tissue distribution, expressed by the venom gland.

The protein localises to the secreted. The sequence is that of Probable weak neurotoxin 3FTx-Lio1 from Erythrolamprus poecilogyrus (Water snake).